Consider the following 314-residue polypeptide: Protein phosphatase PTC7 homolog fig (314 aa).

The PPM-type phosphatase domain occupies 43–309 (PYLVTVVQGR…DDITLILSSV (267 aa)). Positions 87, 88, and 232 each coordinate Mn(2+).

Belongs to the PP2C family. Requires Mg(2+) as cofactor. Mn(2+) is required as a cofactor.

The enzyme catalyses O-phospho-L-seryl-[protein] + H2O = L-seryl-[protein] + phosphate. The catalysed reaction is O-phospho-L-threonyl-[protein] + H2O = L-threonyl-[protein] + phosphate. This chain is Protein phosphatase PTC7 homolog fig, found in Drosophila simulans (Fruit fly).